We begin with the raw amino-acid sequence, 575 residues long: Adenine deaminase 1 (575 aa).

It belongs to the metallo-dependent hydrolases superfamily. Adenine deaminase family. Mn(2+) is required as a cofactor.

It carries out the reaction adenine + H2O + H(+) = hypoxanthine + NH4(+). This Agrobacterium fabrum (strain C58 / ATCC 33970) (Agrobacterium tumefaciens (strain C58)) protein is Adenine deaminase 1.